The sequence spans 553 residues: Transcriptional regulator HilA (553 aa).

The segment at residues 11-107 is a DNA-binding region (ompR/PhoB-type); that stretch reads NKKFVFDDFI…LYGQGYRFNR (97 aa). D62 bears the 4-aspartylphosphate mark. The stretch at 372-405 is one TPR repeat; sequence ADIKYYYGWNLFMAGQLEEALQTINECLKLDPTR.

In terms of biological role, the main transcriptional regulator of the Salmonella pathogenicity island 1 (SPI1) gene expression. Activates the expression of invasion genes by a direct action at their promoters and also indirectly by increasing the level of invF. Also binds upstream of prgH and directly activates the expression of prgHIJK operon. The polypeptide is Transcriptional regulator HilA (hilA) (Salmonella paratyphi A (strain ATCC 9150 / SARB42)).